Consider the following 244-residue polypeptide: Phosphoadenosine 5'-phosphosulfate reductase (244 aa).

The Nucleophile; cysteine thiosulfonate intermediate role is filled by Cys239.

It belongs to the PAPS reductase family. CysH subfamily.

Its subcellular location is the cytoplasm. It catalyses the reaction [thioredoxin]-disulfide + sulfite + adenosine 3',5'-bisphosphate + 2 H(+) = [thioredoxin]-dithiol + 3'-phosphoadenylyl sulfate. It participates in sulfur metabolism; hydrogen sulfide biosynthesis; sulfite from sulfate: step 3/3. Functionally, catalyzes the formation of sulfite from phosphoadenosine 5'-phosphosulfate (PAPS) using thioredoxin as an electron donor. This is Phosphoadenosine 5'-phosphosulfate reductase from Salmonella newport (strain SL254).